A 95-amino-acid chain; its full sequence is Aspartyl/glutamyl-tRNA(Asn/Gln) amidotransferase subunit C (95 aa).

The protein belongs to the GatC family. In terms of assembly, heterotrimer of A, B and C subunits.

It carries out the reaction L-glutamyl-tRNA(Gln) + L-glutamine + ATP + H2O = L-glutaminyl-tRNA(Gln) + L-glutamate + ADP + phosphate + H(+). The catalysed reaction is L-aspartyl-tRNA(Asn) + L-glutamine + ATP + H2O = L-asparaginyl-tRNA(Asn) + L-glutamate + ADP + phosphate + 2 H(+). Functionally, allows the formation of correctly charged Asn-tRNA(Asn) or Gln-tRNA(Gln) through the transamidation of misacylated Asp-tRNA(Asn) or Glu-tRNA(Gln) in organisms which lack either or both of asparaginyl-tRNA or glutaminyl-tRNA synthetases. The reaction takes place in the presence of glutamine and ATP through an activated phospho-Asp-tRNA(Asn) or phospho-Glu-tRNA(Gln). This is Aspartyl/glutamyl-tRNA(Asn/Gln) amidotransferase subunit C from Prosthecochloris aestuarii (strain DSM 271 / SK 413).